Here is a 298-residue protein sequence, read N- to C-terminus: MVDQEQFDISNVLIEALPYIKKFHNKKIMIKYGGHAMIDENAMSSTARDTVLLKYVGMQPIVVHGGGPEISRSMDKMGKEPKFIGGLRVTDKETMEIVKMVLVGKINTEIVSKLGFHGGKSVGISGKDSYLVEASRKGLTKVKHENGEVLEVDLGYVGKIDRVNKQLVDDLTNNNYIPVISPLGIDDDGNTLNLNADTVAGSIASEVNAEKLIVLTDVPGILTDPDDPESMIRRIRTDELKELIKDGIITGGMIPKVETCINAVENGVKTAHILDGRLNHSILLEIFTKHGIGTMVRE.

Residues 66-67 (GG), arginine 88, and asparagine 193 each bind substrate.

This sequence belongs to the acetylglutamate kinase family. ArgB subfamily.

It is found in the cytoplasm. The enzyme catalyses N-acetyl-L-glutamate + ATP = N-acetyl-L-glutamyl 5-phosphate + ADP. Its pathway is amino-acid biosynthesis; L-arginine biosynthesis; N(2)-acetyl-L-ornithine from L-glutamate: step 2/4. Catalyzes the ATP-dependent phosphorylation of N-acetyl-L-glutamate. This chain is Acetylglutamate kinase, found in Methanosphaera stadtmanae (strain ATCC 43021 / DSM 3091 / JCM 11832 / MCB-3).